The following is a 163-amino-acid chain: Transcription antitermination protein NusB (163 aa).

The protein belongs to the NusB family.

Involved in transcription antitermination. Required for transcription of ribosomal RNA (rRNA) genes. Binds specifically to the boxA antiterminator sequence of the ribosomal RNA (rrn) operons. This is Transcription antitermination protein NusB from Granulibacter bethesdensis (strain ATCC BAA-1260 / CGDNIH1).